Reading from the N-terminus, the 328-residue chain is Coiled-coil domain-containing protein 54 (328 aa).

A coiled-coil region spans residues 93–148 (KIQEKTDFFQKQMQVLETKMNVNENKQCATAEDIFSVKEDVDALKKKVTELGNQNS). Thr-182 is modified (phosphothreonine).

In Bos taurus (Bovine), this protein is Coiled-coil domain-containing protein 54 (CCDC54).